The chain runs to 167 residues: S-ribosylhomocysteine lyase (167 aa).

Fe cation contacts are provided by H54, H58, and C128.

It belongs to the LuxS family. As to quaternary structure, homodimer. Fe cation serves as cofactor.

The enzyme catalyses S-(5-deoxy-D-ribos-5-yl)-L-homocysteine = (S)-4,5-dihydroxypentane-2,3-dione + L-homocysteine. In terms of biological role, involved in the synthesis of autoinducer 2 (AI-2) which is secreted by bacteria and is used to communicate both the cell density and the metabolic potential of the environment. The regulation of gene expression in response to changes in cell density is called quorum sensing. Catalyzes the transformation of S-ribosylhomocysteine (RHC) to homocysteine (HC) and 4,5-dihydroxy-2,3-pentadione (DPD). This Haemophilus influenzae (strain 86-028NP) protein is S-ribosylhomocysteine lyase.